The chain runs to 957 residues: SH3 domain-binding protein 4-A (957 aa).

The 60-residue stretch at 54–113 (ENVKEVVAIKDYCPNNFTTLKFSKGEHLYVLDASGGDWWYAHNSTEMGYIPSSYVQPLNY) folds into the SH3 1 domain. The ZU5 domain maps to 312–449 (TSIVCRLDSS…LEPVMYVVMV (138 aa)). An SH3 2 domain is found at 649–719 (TSLKYGKLLK…HAKNVLVVGK (71 aa)).

Homodimer or homooligomer.

Its subcellular location is the membrane. It is found in the clathrin-coated pit. The protein resides in the cytoplasmic vesicle. It localises to the clathrin-coated vesicle. The protein localises to the nucleus. Possible role in regulating endocytosis of the transferrin receptor at the plasma membrane. Alternatively, may function as a negative regulator of the amino acid-induced TOR signaling by inhibiting the formation of active Rag GTPase complexes. Preferentially binds inactive Rag GTPase complexes and prevents their interaction with the mTORC1 complex inhibiting its relocalization to lysosomes and its activation. Thereby, may indirectly regulate cell growth, proliferation and autophagy. The protein is SH3 domain-binding protein 4-A (sh3bp4-a) of Xenopus laevis (African clawed frog).